The chain runs to 375 residues: Odorant receptor 49b (375 aa).

Residues 1–28 (MFEDIQLIYMNIKILRFWALLYDKNLRR) lie on the Cytoplasmic side of the membrane. The helical transmembrane segment at 29 to 49 (YVCIGLASFHIFTQIVYMMST) threads the bilayer. Residues 50 to 60 (NEGLTGIIRNS) lie on the Extracellular side of the membrane. A helical transmembrane segment spans residues 61 to 77 (YMLVLWINTVLRAYLLL). Residues 78-121 (ADHDRYLALIQKLTEAYYDLLNLNDSYISEILDQVNKVGKLMAR) lie on the Cytoplasmic side of the membrane. A helical membrane pass occupies residues 122 to 142 (GNLFFGMLTSMGFGLYPLSSS). The Extracellular segment spans residues 143 to 176 (ERVLPFGSKIPGLNEYESPYYEMWYIFQMLITPM). The chain crosses the membrane as a helical span at residues 177–197 (GCCMYIPYTSLIVGLIMFGIV). Residues 198 to 251 (RCKALQHRLRQVALKHPYGDRDPRELREEIIACIRYQQSIIEYMDHINELTTMM) lie on the Cytoplasmic side of the membrane. Residues 252-272 (FLFELMAFSALLCALLFMLII) form a helical membrane-spanning segment. The Extracellular segment spans residues 273 to 278 (VSGTSQ). A helical transmembrane segment spans residues 279-299 (LIIVCMYINMILAQILALYWY). At 300–342 (ANELREQNLAVATAAYETEWFTFDVPLRKNILFMMMRAQRPAA) the chain is on the cytoplasmic side. The chain crosses the membrane as a helical span at residues 343 to 363 (ILLGNIRPITLELFQNLLNTT). The Extracellular segment spans residues 364–375 (YTFFTVLKRVYG).

This sequence belongs to the insect chemoreceptor superfamily. Heteromeric odorant receptor channel (TC 1.A.69) family. Or30a subfamily. As to quaternary structure, interacts with Orco. Complexes exist early in the endomembrane system in olfactory sensory neurons (OSNs), coupling these complexes to the conserved ciliary trafficking pathway. In terms of tissue distribution, expressed in olfactory sensory neurons in the antenna.

The protein localises to the cell membrane. Its function is as follows. Odorant receptor which mediates acceptance or avoidance behavior, depending on its substrates. The odorant receptor repertoire encodes a large collection of odor stimuli that vary widely in identity, intensity, and duration. May form a complex with Orco to form odorant-sensing units, providing sensitive and prolonged odorant signaling and calcium permeability. This chain is Odorant receptor 49b (Or49b), found in Drosophila melanogaster (Fruit fly).